The sequence spans 318 residues: Transaldolase (318 aa).

Lys132 (schiff-base intermediate with substrate) is an active-site residue.

This sequence belongs to the transaldolase family. Type 1 subfamily. Homodimer.

It localises to the cytoplasm. The enzyme catalyses D-sedoheptulose 7-phosphate + D-glyceraldehyde 3-phosphate = D-erythrose 4-phosphate + beta-D-fructose 6-phosphate. It participates in carbohydrate degradation; pentose phosphate pathway; D-glyceraldehyde 3-phosphate and beta-D-fructose 6-phosphate from D-ribose 5-phosphate and D-xylulose 5-phosphate (non-oxidative stage): step 2/3. Transaldolase is important for the balance of metabolites in the pentose-phosphate pathway. The chain is Transaldolase from Shewanella sp. (strain MR-4).